A 154-amino-acid polypeptide reads, in one-letter code: Large ribosomal subunit protein uL15 (154 aa).

Positions 1 to 13 (MKLHELKPAEGSR) are enriched in basic and acidic residues. The tract at residues 1–52 (MKLHELKPAEGSRKNRKRVGRGPGGTDKTAGRGHKGQKSRSGAGKGSFFEGG) is disordered.

The protein belongs to the universal ribosomal protein uL15 family. Part of the 50S ribosomal subunit.

Binds to the 23S rRNA. This is Large ribosomal subunit protein uL15 from Deinococcus deserti (strain DSM 17065 / CIP 109153 / LMG 22923 / VCD115).